A 370-amino-acid polypeptide reads, in one-letter code: Probable trehalose-phosphate phosphatase J (370 aa).

The protein belongs to the trehalose phosphatase family. It depends on a divalent metal cation as a cofactor.

It catalyses the reaction alpha,alpha-trehalose 6-phosphate + H2O = alpha,alpha-trehalose + phosphate. It participates in glycan biosynthesis; trehalose biosynthesis. Functionally, removes the phosphate from trehalose 6-phosphate to produce free trehalose. Trehalose accumulation in plant may improve abiotic stress tolerance. The sequence is that of Probable trehalose-phosphate phosphatase J (TPPJ) from Arabidopsis thaliana (Mouse-ear cress).